The primary structure comprises 158 residues: NAD(P)H-quinone oxidoreductase subunit N (158 aa).

This sequence belongs to the complex I NdhN subunit family. In terms of assembly, NDH-1 can be composed of about 15 different subunits; different subcomplexes with different compositions have been identified which probably have different functions.

It is found in the cellular thylakoid membrane. The enzyme catalyses a plastoquinone + NADH + (n+1) H(+)(in) = a plastoquinol + NAD(+) + n H(+)(out). It carries out the reaction a plastoquinone + NADPH + (n+1) H(+)(in) = a plastoquinol + NADP(+) + n H(+)(out). NDH-1 shuttles electrons from an unknown electron donor, via FMN and iron-sulfur (Fe-S) centers, to quinones in the respiratory and/or the photosynthetic chain. The immediate electron acceptor for the enzyme in this species is believed to be plastoquinone. Couples the redox reaction to proton translocation, and thus conserves the redox energy in a proton gradient. Cyanobacterial NDH-1 also plays a role in inorganic carbon-concentration. The chain is NAD(P)H-quinone oxidoreductase subunit N from Gloeothece citriformis (strain PCC 7424) (Cyanothece sp. (strain PCC 7424)).